Consider the following 275-residue polypeptide: Putative carbamate hydrolase RutD (275 aa).

Belongs to the AB hydrolase superfamily. Hydrolase RutD family.

It catalyses the reaction carbamate + 2 H(+) = NH4(+) + CO2. In terms of biological role, involved in pyrimidine catabolism. May facilitate the hydrolysis of carbamate, a reaction that can also occur spontaneously. This is Putative carbamate hydrolase RutD from Escherichia coli (strain UTI89 / UPEC).